A 130-amino-acid polypeptide reads, in one-letter code: Fluoride-specific ion channel FluC (130 aa).

The next 4 membrane-spanning stretches (helical) occupy residues 10–30 (FAVALGAIGGSLSRYYLSLWF), 41–61 (GTLIINLSGCVVMGWFMTVAM), 72–89 (LLFGVGFLGSYTTFSTYE), and 105–125 (LVYWLGSCLFGALAMELGILL). Na(+) is bound by residues G80 and T83.

It belongs to the fluoride channel Fluc/FEX (TC 1.A.43) family.

It localises to the cell inner membrane. The enzyme catalyses fluoride(in) = fluoride(out). With respect to regulation, na(+) is not transported, but it plays an essential structural role and its presence is essential for fluoride channel function. Functionally, fluoride-specific ion channel. Important for reducing fluoride concentration in the cell, thus reducing its toxicity. The chain is Fluoride-specific ion channel FluC from Synechococcus sp. (strain JA-2-3B'a(2-13)) (Cyanobacteria bacterium Yellowstone B-Prime).